The chain runs to 340 residues: GTPase Obg (340 aa).

The Obg domain occupies 1-159; sequence MDFIDEVKLY…KYVVLKLKVL (159 aa). The OBG-type G domain occupies 160 to 329; that stretch reads SDVGIIGMPN…LNEKLKKGSS (170 aa). GTP-binding positions include 166 to 173, 191 to 195, 212 to 215, 279 to 282, and 310 to 312; these read GMPNAGKS, FTTIK, DIPG, NKCD, and GED. Positions 173 and 193 each coordinate Mg(2+).

It belongs to the TRAFAC class OBG-HflX-like GTPase superfamily. OBG GTPase family. In terms of assembly, monomer. Mg(2+) serves as cofactor.

The protein localises to the cytoplasm. In terms of biological role, an essential GTPase which binds GTP, GDP and possibly (p)ppGpp with moderate affinity, with high nucleotide exchange rates and a fairly low GTP hydrolysis rate. Plays a role in control of the cell cycle, stress response, ribosome biogenesis and in those bacteria that undergo differentiation, in morphogenesis control. In Wolbachia sp. subsp. Brugia malayi (strain TRS), this protein is GTPase Obg.